A 636-amino-acid polypeptide reads, in one-letter code: Transcriptional repressor CTCFL (636 aa).

Disordered regions lie at residues 17 to 38 (KEQK…VQRV), 160 to 195 (ENPE…DKRE), and 222 to 257 (LEEQ…PQSF). A compositionally biased stretch (acidic residues) spans 160–170 (ENPELTPDLDE). Over residues 242-251 (AKPKRRRQTK) the composition is skewed to basic residues. 11 C2H2-type zinc fingers span residues 257–279 (FQCD…IKIH), 285–307 (HLCH…VNTH), 313–336 (HKCR…RYKH), 342–364 (FKCS…IRSH), 370–392 (FQCC…MRTH), 398–421 (YECP…AQKH), 428–451 (YECP…RNLH), 458–480 (MKCR…QRTH), 486–508 (FKCK…MRMH), 514–537 (FSCL…RKYH), and 546–572 (HLCL…DPEH). Residues 562 to 624 (QRHRKKCDPE…AAGSQSPDHG (63 aa)) are disordered. Basic and acidic residues predominate over residues 568–583 (CDPEHETLAPNKDRRP).

Belongs to the CTCF zinc-finger protein family. In terms of assembly, interacts with histones, PRMT7 and SETD1A. Interacts (via N-terminus) with BAG6/BAT3. Testis-specific.

Its subcellular location is the cytoplasm. The protein resides in the nucleus. In terms of biological role, testis-specific DNA binding protein responsible for insulator function, nuclear architecture and transcriptional control, which probably acts by recruiting epigenetic chromatin modifiers. Plays a key role in gene imprinting in male germline, by participating in the establishment of differential methylation at the IGF2/H19 imprinted control region (ICR). Directly binds the unmethylated H19 ICR and recruits the PRMT7 methyltransferase, leading to methylate histone H4 'Arg-3' to form H4R3sme2. This probably leads to recruit de novo DNA methyltransferases at these sites. Seems to act as tumor suppressor. In association with DNMT1 and DNMT3B, involved in activation of BAG1 gene expression by binding to its promoter. Required for dimethylation of H3 lysine 4 (H3K4me2) of MYC and BRCA1 promoters. The polypeptide is Transcriptional repressor CTCFL (Ctcfl) (Mus musculus (Mouse)).